The chain runs to 492 residues: GTPase Der (492 aa).

EngA-type G domains are found at residues 3 to 166 (PVVA…VDEV) and 205 to 378 (IKLA…DSAT). GTP is bound by residues 9–16 (GRPNVGKS), 56–60 (DTGGI), 118–121 (NKTD), 211–218 (GRPNVGKS), 258–262 (DTAGV), and 323–326 (NKWD). The KH-like domain maps to 379 to 463 (RRVSTAMLTR…PIRIQFKEGE (85 aa)).

This sequence belongs to the TRAFAC class TrmE-Era-EngA-EngB-Septin-like GTPase superfamily. EngA (Der) GTPase family. Associates with the 50S ribosomal subunit.

Functionally, GTPase that plays an essential role in the late steps of ribosome biogenesis. This is GTPase Der from Klebsiella pneumoniae subsp. pneumoniae (strain ATCC 700721 / MGH 78578).